The primary structure comprises 872 residues: Alanine--tRNA ligase (872 aa).

4 residues coordinate Zn(2+): His-567, His-571, Cys-669, and His-673.

Belongs to the class-II aminoacyl-tRNA synthetase family. Zn(2+) serves as cofactor.

It is found in the cytoplasm. It carries out the reaction tRNA(Ala) + L-alanine + ATP = L-alanyl-tRNA(Ala) + AMP + diphosphate. Catalyzes the attachment of alanine to tRNA(Ala) in a two-step reaction: alanine is first activated by ATP to form Ala-AMP and then transferred to the acceptor end of tRNA(Ala). Also edits incorrectly charged Ser-tRNA(Ala) and Gly-tRNA(Ala) via its editing domain. In Streptococcus pyogenes serotype M1, this protein is Alanine--tRNA ligase.